A 211-amino-acid polypeptide reads, in one-letter code: Histone H1t (211 aa).

Residue alanine 1 is modified to N-acetylalanine. A compositionally biased stretch (low complexity) spans 1–16 (AETAPAAPADSVPASV). The segment at 1–42 (AETAPAAPADSVPASVEKPPAKKRGKKPVGLTGTSRKAPSAS) is disordered. Residues 32–42 (TGTSRKAPSAS) show a composition bias toward polar residues. The H15 domain maps to 39 to 112 (PSASVSKLIT…GASGSFKLSK (74 aa)). Arginine 57 carries the citrulline modification. Residues 101–211 (GTGASGSFKL…TNPRKATNRK (111 aa)) are disordered. Basic residues predominate over residues 121–135 (GKVKKPAAAKTKKLV). Phosphoserine is present on serine 142. A compositionally biased stretch (basic residues) spans 147–156 (KANKRAKKSR). Phosphothreonine is present on threonine 158. Serine 166 and serine 181 each carry phosphoserine. A compositionally biased stretch (basic residues) spans 176-189 (KQQRKSPAKARAAK).

Belongs to the histone H1/H5 family. Post-translationally, phosphorylated in early spermatids. In terms of processing, citrullination at Arg-57 (H1R54ci) by PADI4 takes place within the DNA-binding site of H1 and results in its displacement from chromatin and global chromatin decondensation, thereby promoting pluripotency and stem cell maintenance. As to expression, testis-specific.

The protein resides in the nucleus. It localises to the chromosome. Its function is as follows. Testis-specific histone H1 that forms less compacted chromatin compared to other H1 histone subtypes. Formation of more relaxed chromatin may be required to promote chromatin architecture required for proper chromosome regulation during meiosis, such as homologous recombination. Histones H1 act as linkers that bind to nucleosomes and compact polynucleosomes into a higher-order chromatin configuration. The polypeptide is Histone H1t (Sus scrofa (Pig)).